The chain runs to 490 residues: Phosphoglucosamine mutase (490 aa).

Catalysis depends on Ser-139, which acts as the Phosphoserine intermediate. Positions 139, 279, 281, and 283 each coordinate Mg(2+). The residue at position 139 (Ser-139) is a Phosphoserine.

The protein belongs to the phosphohexose mutase family. The cofactor is Mg(2+). Activated by phosphorylation.

The catalysed reaction is alpha-D-glucosamine 1-phosphate = D-glucosamine 6-phosphate. Functionally, catalyzes the conversion of glucosamine-6-phosphate to glucosamine-1-phosphate. This is Phosphoglucosamine mutase from Trichormus variabilis (strain ATCC 29413 / PCC 7937) (Anabaena variabilis).